The following is a 93-amino-acid chain: MEMPRRFNSYCPNCDEHHQLEAEKVRSGRSSGMKWDARRTKRANASIGNHGRFSKVPVGNKPTNRTDLKYRCSECGNAHLREGWRAGRLVLQE.

Positions 11 and 14 each coordinate Zn(2+). A C4-type zinc finger spans residues Cys-11–Cys-75. A disordered region spans residues Lys-24–Pro-62. Residues Cys-72 and Cys-75 each coordinate Zn(2+).

The protein belongs to the eukaryotic ribosomal protein eL42 family. Part of the 50S ribosomal subunit. Requires Zn(2+) as cofactor.

Binds to the 23S rRNA. This is Large ribosomal subunit protein eL42 from Halobacterium salinarum (strain ATCC 700922 / JCM 11081 / NRC-1) (Halobacterium halobium).